The sequence spans 153 residues: Aspartate carbamoyltransferase regulatory chain (153 aa).

Residues C109, C114, C138, and C141 each contribute to the Zn(2+) site.

The protein belongs to the PyrI family. In terms of assembly, contains catalytic and regulatory chains. Requires Zn(2+) as cofactor.

In terms of biological role, involved in allosteric regulation of aspartate carbamoyltransferase. This chain is Aspartate carbamoyltransferase regulatory chain, found in Enterobacter sp. (strain 638).